Reading from the N-terminus, the 137-residue chain is MLQPKRTKFRKMHKGRNTGLAHRGSTVAFGQIGLKSLTRGRMTARQIEAARRTITRKIKRGGKIWIRVFPDKPITNKPLEVRMGKGKGPVEYWVCEIKPGKILYELEGISEELAREALTLAASKLPFKTTIVKRTIM.

It belongs to the universal ribosomal protein uL16 family. As to quaternary structure, part of the 50S ribosomal subunit.

In terms of biological role, binds 23S rRNA and is also seen to make contacts with the A and possibly P site tRNAs. In Psychrobacter arcticus (strain DSM 17307 / VKM B-2377 / 273-4), this protein is Large ribosomal subunit protein uL16.